We begin with the raw amino-acid sequence, 299 residues long: MSSIKIECVLPENCHCGESPVWEEASGSLLFVDIPGKKFCRWNPLTKAVQRMTMDAPVTSVALRKSGGYVATVGTKFCALNLEDQSVVALATVDKDKKNNRFNDGKVDPAGRYFAGTMAEETAPAVLERHQGSLYALFPDHQVKKYFDQVDISNGLDWSLDHKIFYYIDSLAYSVDAFDYDLQTGQISNRRSIYKLEKEEQIPDGMCIDTEGKLWVACYNGGRVIRLDPETGKRLQTVKLPVDKTTSCCFGGKDYSEMYVTCARDGLDPDSLSRQPEAGGIFKITGLGVKGIPPYSYAG.

Residue glutamate 18 participates in a divalent metal cation binding. Substrate-binding residues include arginine 101, asparagine 103, and glutamate 121. Residue lysine 144 is modified to N6-succinyllysine. Asparagine 154 and aspartate 204 together coordinate a divalent metal cation. The active-site Proton donor/acceptor is aspartate 204. N6-succinyllysine occurs at positions 244 and 253.

The protein belongs to the SMP-30/CGR1 family. Monomer. The cofactor is Zn(2+). It depends on Mn(2+) as a cofactor. Ca(2+) is required as a cofactor. Requires Mg(2+) as cofactor.

The protein localises to the cytoplasm. The enzyme catalyses D-glucono-1,5-lactone + H2O = D-gluconate + H(+). Its pathway is cofactor biosynthesis; L-ascorbate biosynthesis via UDP-alpha-D-glucuronate pathway; L-ascorbate from UDP-alpha-D-glucuronate: step 3/4. Its function is as follows. Gluconolactonase with low activity towards other sugar lactones, including gulonolactone and galactonolactone. Catalyzes a key step in ascorbic acid (vitamin C) biosynthesis. Can also hydrolyze diisopropyl phosphorofluoridate and phenylacetate (in vitro). Calcium-binding protein. Modulates Ca(2+) signaling, and Ca(2+)-dependent cellular processes and enzyme activities. The sequence is that of Regucalcin (RGN) from Oryctolagus cuniculus (Rabbit).